We begin with the raw amino-acid sequence, 584 residues long: Leucine-rich repeat and fibronectin type III domain-containing protein 1 (584 aa).

Positions 1–17 (MERLVFCVLVFGALAKA) are cleaved as a signal peptide. The LRRNT domain maps to 18 to 51 (QLCPGRCICQTISPTLTLLCAKTGLLFVPPTVDR). Over 18-494 (QLCPGRCICQ…VPSQFLGGTM (477 aa)) the chain is Extracellular. LRR repeat units lie at residues 52–73 (KTVE…DFLN), 76–97 (SLVH…AFMG), 100–121 (SLRA…QLKG), 124–145 (NLRH…SFDE), 149–170 (TIED…AIAR), 173–194 (NINT…TFTL), and 197–218 (KLVR…TLFQ). The N-linked (GlcNAc...) asparagine glycan is linked to Asn-73. The region spanning 241-287 (NPLHCNCELLWLRRLTREDDLETCASPEHLMDKYFWSIQEEEFICEP) is the LRRCT domain. Residues 288 to 375 (PLITKHQVTK…GIATAAVHVH (88 aa)) enclose the Ig-like domain. The cysteines at positions 310 and 359 are disulfide-linked. N-linked (GlcNAc...) asparagine glycosylation is found at Asn-332, Asn-341, Asn-384, Asn-408, and Asn-421. Residues 393 to 414 (DPGLSDISTSSRSSSNDSKTHS) are disordered. The segment covering 397-409 (SDISTSSRSSSND) has biased composition (low complexity). A helical transmembrane segment spans residues 495–515 (IIIIGGIIVASVLVFIIILMI). Residues 516 to 584 (RYKAYSGGGG…MVLPILHLLF (69 aa)) are Cytoplasmic-facing. Residues 539–564 (HVHSQTNGSRSAATKQSEEPPESPAG) form a disordered region. The segment covering 540–553 (VHSQTNGSRSAATK) has biased composition (polar residues).

It belongs to the LRFN family.

The protein localises to the membrane. The protein resides in the synapse. Involved in the regulation of excitatory synapses. The polypeptide is Leucine-rich repeat and fibronectin type III domain-containing protein 1 (lrfn1) (Danio rerio (Zebrafish)).